Consider the following 96-residue polypeptide: Cathelin (96 aa).

A Pyrrolidone carboxylic acid modification is found at Gln1. The disordered stretch occupies residues 31-50 (DQPPKADEDPGTPKPVSFTV). 2 disulfides stabilise this stretch: Cys55-Cys66 and Cys73-Cys90.

Belongs to the cathelicidin family.

The protein resides in the secreted. Its function is as follows. Probably a microbicidal peptide. The sequence is that of Cathelin from Sus scrofa (Pig).